Consider the following 643-residue polypeptide: Fructose-1,6-bisphosphatase class 3 (643 aa).

Belongs to the FBPase class 3 family. Mn(2+) is required as a cofactor.

The enzyme catalyses beta-D-fructose 1,6-bisphosphate + H2O = beta-D-fructose 6-phosphate + phosphate. It participates in carbohydrate biosynthesis; gluconeogenesis. This is Fructose-1,6-bisphosphatase class 3 from Lacticaseibacillus casei (strain BL23) (Lactobacillus casei).